Reading from the N-terminus, the 230-residue chain is Phosphoribosylaminoimidazole-succinocarboxamide synthase (230 aa).

The protein belongs to the SAICAR synthetase family.

The catalysed reaction is 5-amino-1-(5-phospho-D-ribosyl)imidazole-4-carboxylate + L-aspartate + ATP = (2S)-2-[5-amino-1-(5-phospho-beta-D-ribosyl)imidazole-4-carboxamido]succinate + ADP + phosphate + 2 H(+). The protein operates within purine metabolism; IMP biosynthesis via de novo pathway; 5-amino-1-(5-phospho-D-ribosyl)imidazole-4-carboxamide from 5-amino-1-(5-phospho-D-ribosyl)imidazole-4-carboxylate: step 1/2. This chain is Phosphoribosylaminoimidazole-succinocarboxamide synthase, found in Thermotoga sp. (strain RQ2).